The chain runs to 631 residues: Pescadillo homolog (631 aa).

In terms of domain architecture, BRCT spans 321 to 414 (RLRTLFKGLK…QLLPTNDYFL (94 aa)). The segment covering 428–442 (SKRDSYIPPEEKALH) has biased composition (basic and acidic residues). Disordered stretches follow at residues 428–471 (SKRD…EADQ), 489–561 (YKKY…VDEH), and 602–631 (ADNK…KLVK). 2 positions are modified to phosphoserine: S453 and S457. Composition is skewed to acidic residues over residues 453-471 (SEEE…EADQ) and 498-525 (VNED…EDVD). Basic and acidic residues predominate over residues 526-538 (EQTKRKQQEKEKM). The span at 544-553 (KVHKVNKRQV) shows a compositional bias: basic residues. Residues 591–631 (WLLRKKRRNIDADNKEAKKAAKREARKQAAEAAARAAKLVK) are a coiled coil. Positions 602 to 619 (ADNKEAKKAAKREARKQA) are enriched in basic and acidic residues. Residues 620 to 631 (AEAAARAAKLVK) are compositionally biased toward low complexity.

The protein belongs to the pescadillo family.

The protein resides in the nucleus. The protein localises to the nucleolus. Its subcellular location is the nucleoplasm. In terms of biological role, required for maturation of ribosomal RNAs and formation of the large ribosomal subunit. The chain is Pescadillo homolog from Drosophila pseudoobscura pseudoobscura (Fruit fly).